Here is a 419-residue protein sequence, read N- to C-terminus: Putative nucleobase-ascorbate transporter 9 (419 aa).

Over residues 1 to 22 the composition is skewed to gly residues; that stretch reads MANGAGNGGGGAGGNGGGGNNG. The segment at 1-28 is disordered; sequence MANGAGNGGGGAGGNGGGGNNGAGNRAE. Transmembrane regions (helical) follow at residues 64 to 84, 91 to 111, 113 to 133, 153 to 173, 184 to 204, 220 to 240, 273 to 293, 313 to 333, 334 to 354, and 370 to 390; these read LLSL…MGGG, VIQT…FFGT, LPVI…IIYS, IQGA…LGVW, SIAP…FPLV, GMML…SSGV, SFAM…LFYA, RVIQ…KFGA, FFAS…LCFV, and FNTK…PQYF.

It belongs to the nucleobase:cation symporter-2 (NCS2) (TC 2.A.40) family.

The protein localises to the membrane. This is Putative nucleobase-ascorbate transporter 9 (NAT9) from Arabidopsis thaliana (Mouse-ear cress).